Reading from the N-terminus, the 304-residue chain is Acetylglutamate kinase (304 aa).

Substrate is bound by residues 69-70 (GG), R91, and N202.

Belongs to the acetylglutamate kinase family. ArgB subfamily.

It is found in the cytoplasm. It carries out the reaction N-acetyl-L-glutamate + ATP = N-acetyl-L-glutamyl 5-phosphate + ADP. It participates in amino-acid biosynthesis; L-arginine biosynthesis; N(2)-acetyl-L-ornithine from L-glutamate: step 2/4. Its function is as follows. Catalyzes the ATP-dependent phosphorylation of N-acetyl-L-glutamate. This Caulobacter sp. (strain K31) protein is Acetylglutamate kinase.